The primary structure comprises 551 residues: Probable NADH-ubiquinone oxidoreductase C3A11.07, mitochondrial (551 aa).

A mitochondrion-targeting transit peptide spans 1–37 (MLFSRSILRGMPKAGIPKSPLALSASRNLRLANSVRF). 93–123 (TLVVLGAGWGATSILRTIDTSLFNVIVVSPR) serves as a coordination point for FAD. An NAD(+)-binding site is contributed by 255–291 (VHTVVVGGGPTGMEFAGEMADFIEDDLKSWYPELADD).

Belongs to the NADH dehydrogenase family.

It localises to the mitochondrion. It carries out the reaction a quinone + NADH + H(+) = a quinol + NAD(+). It catalyses the reaction a ubiquinone + NADH + H(+) = a ubiquinol + NAD(+). Catalyzes the oxidation of NADH. This is Probable NADH-ubiquinone oxidoreductase C3A11.07, mitochondrial from Schizosaccharomyces pombe (strain 972 / ATCC 24843) (Fission yeast).